Here is a 72-residue protein sequence, read N- to C-terminus: Putative snRNP Sm-like protein (72 aa).

The Sm domain maps to 4-72 (RPLDILNNAL…RGDNVVYVSP (69 aa)).

It belongs to the snRNP Sm proteins family.

In Methanosarcina acetivorans (strain ATCC 35395 / DSM 2834 / JCM 12185 / C2A), this protein is Putative snRNP Sm-like protein.